We begin with the raw amino-acid sequence, 117 residues long: Appetite-regulating hormone (117 aa).

The N-terminal stretch at 1–23 (MPSPGTVCSLLLLGMLWLDLAMA) is a signal peptide. S26 carries the O-decanoyl serine; alternate lipid modification. A lipid anchor (O-hexanoyl serine; alternate) is attached at S26. A lipid anchor (O-octanoyl serine; alternate) is attached at S26. The segment at 29–67 (SPEHQRAQQRKESKKPPAKLQPRALGGWLRPEDGDQAEG) is disordered. Over residues 31 to 43 (EHQRAQQRKESKK) the composition is skewed to basic and acidic residues. Residues 52–75 (ALGGWLRPEDGDQAEGAEDELEIQ) constitute a propeptide, removed in mature form. Residue L98 is modified to Leucine amide. A propeptide spans 99 to 117 (GKFLQDILWEEAKEAPADK) (removed in mature form).

It belongs to the motilin family. In terms of processing, O-octanoylated by GOAT/MBOAT4. O-octanoylation is essential for ghrelin activity. Amidation of Leu-98 is essential for obestatin activity.

The protein localises to the secreted. Its function is as follows. Ghrelin is the ligand for growth hormone secretagogue receptor type 1 (GHSR). Induces the release of growth hormone from the pituitary. Has an appetite-stimulating effect, induces adiposity and stimulates gastric acid secretion. Involved in growth regulation. In terms of biological role, obestatin may be the ligand for GPR39. May have an appetite-reducing effect resulting in decreased food intake. May reduce gastric emptying activity and jejunal motility. This Papio hamadryas (Hamadryas baboon) protein is Appetite-regulating hormone (GHRL).